The primary structure comprises 427 residues: UPF0597 protein FN1147 (427 aa).

This sequence belongs to the UPF0597 family.

This chain is UPF0597 protein FN1147, found in Fusobacterium nucleatum subsp. nucleatum (strain ATCC 25586 / DSM 15643 / BCRC 10681 / CIP 101130 / JCM 8532 / KCTC 2640 / LMG 13131 / VPI 4355).